The sequence spans 403 residues: MADFFQNGVITTLQNFRNRSLEELEYELELFSKRRNMVLLLPALYSEFEGPAMPKIIQELKDIRYLYKIVLSLDRATEEEFKKVKKIMSEINTEVKVIWHDGPRMQRLYRELEEAGFNVSIPGKGRSVWMSLGYILSDADAYAIALHDCDIVNYSRELPARLLYPVVHPALDFEFSKGYYARVTHKLYGRVTRIFYTPLIRALIRILGCNRFLVYLDSFRYALSGEFAFIRTLARGIRISPTWGLEVSMLSEVYQNTSFNRICQVEVMDTYEHKHQKLVKSTSEGLVKMASDIAKTLFRVLAHDGFVFSEAFFRTLLTTYLQEARYAIEKYNALSLINGLTYDRHAEIEAIEVFVDALKKAEKEFIEDPIGVPLMSAWVRVRAALPEISDKLIRAVEEDNSDD.

Asp150 provides a ligand contact to a divalent metal cation. Residue 189–192 (GRVT) participates in (2R)-3-phosphoglycerate binding. His273 is an a divalent metal cation binding site.

This sequence belongs to the glycosyltransferase 2 family. In terms of assembly, homodimer. The cofactor is Mn(2+). It depends on Co(2+) as a cofactor. Mg(2+) serves as cofactor. Requires Ni(2+) as cofactor.

It carries out the reaction an NDP-alpha-D-glucose + (2R)-3-phosphoglycerate = (2R)-2-O-(alpha-D-glucopyranosyl)-3-phospho-glycerate + a ribonucleoside 5'-diphosphate + H(+). In terms of biological role, involved in the biosynthesis of 6-O-methylglucose lipopolysaccarides (MGLPs). Catalyzes the transfer of a glucose (Glc) moiety from uridine diphosphate (UDP-Glc) to the position 2 of 3-phospho-D-glycerate (3-PGA) to form glucosyl-3-phosphoglycerate (GPG). GpgS is most active with UDP-glucose, followed by GDP-glucose, ADP-glucose, and to a lesser extent, TDP-glucose. 3-PGA is the only acceptor for these glucosyl donors. This is Glucosyl-3-phosphoglycerate synthase from Persephonella marina (strain DSM 14350 / EX-H1).